The chain runs to 340 residues: Ketol-acid reductoisomerase (NADP(+)) (340 aa).

Residues 1–182 (MRVYYDRDCD…GGGRSGIIET (182 aa)) enclose the KARI N-terminal Rossmann domain. NADP(+) is bound by residues 24 to 27 (YGSQ), R48, S51, S53, and 83 to 86 (DELQ). Residue H108 is part of the active site. G134 is an NADP(+) binding site. The KARI C-terminal knotted domain occupies 183 to 329 (NFREECETDL…ETLRGMMPWI (147 aa)). Residues D191, E195, E227, and E231 each contribute to the Mg(2+) site. S252 contributes to the substrate binding site.

It belongs to the ketol-acid reductoisomerase family. It depends on Mg(2+) as a cofactor.

It carries out the reaction (2R)-2,3-dihydroxy-3-methylbutanoate + NADP(+) = (2S)-2-acetolactate + NADPH + H(+). The catalysed reaction is (2R,3R)-2,3-dihydroxy-3-methylpentanoate + NADP(+) = (S)-2-ethyl-2-hydroxy-3-oxobutanoate + NADPH + H(+). It participates in amino-acid biosynthesis; L-isoleucine biosynthesis; L-isoleucine from 2-oxobutanoate: step 2/4. The protein operates within amino-acid biosynthesis; L-valine biosynthesis; L-valine from pyruvate: step 2/4. Functionally, involved in the biosynthesis of branched-chain amino acids (BCAA). Catalyzes an alkyl-migration followed by a ketol-acid reduction of (S)-2-acetolactate (S2AL) to yield (R)-2,3-dihydroxy-isovalerate. In the isomerase reaction, S2AL is rearranged via a Mg-dependent methyl migration to produce 3-hydroxy-3-methyl-2-ketobutyrate (HMKB). In the reductase reaction, this 2-ketoacid undergoes a metal-dependent reduction by NADPH to yield (R)-2,3-dihydroxy-isovalerate. In Roseobacter denitrificans (strain ATCC 33942 / OCh 114) (Erythrobacter sp. (strain OCh 114)), this protein is Ketol-acid reductoisomerase (NADP(+)).